The primary structure comprises 601 residues: Aspartate--tRNA(Asp/Asn) ligase (601 aa).

E174 provides a ligand contact to L-aspartate. The tract at residues 198–201 is aspartate; that stretch reads QLFK. An L-aspartate-binding site is contributed by R220. Residues 220-222 and Q229 contribute to the ATP site; that span reads RDE. Residue H459 coordinates L-aspartate. Position 493 (E493) interacts with ATP. An L-aspartate-binding site is contributed by R500. Residue 545–548 participates in ATP binding; it reads GLDR.

The protein belongs to the class-II aminoacyl-tRNA synthetase family. Type 1 subfamily. In terms of assembly, homodimer.

It localises to the cytoplasm. It carries out the reaction tRNA(Asx) + L-aspartate + ATP = L-aspartyl-tRNA(Asx) + AMP + diphosphate. Functionally, aspartyl-tRNA synthetase with relaxed tRNA specificity since it is able to aspartylate not only its cognate tRNA(Asp) but also tRNA(Asn). Reaction proceeds in two steps: L-aspartate is first activated by ATP to form Asp-AMP and then transferred to the acceptor end of tRNA(Asp/Asn). The polypeptide is Aspartate--tRNA(Asp/Asn) ligase (Variovorax paradoxus (strain S110)).